Here is a 154-residue protein sequence, read N- to C-terminus: Fimbrial protein (154 aa).

A propeptide spans 1–6 (MKAQKG) (leader sequence). At Phe7 the chain carries N-methylphenylalanine. The chain crosses the membrane as a helical span at residues 7–27 (FTLIELMIVVAIIGILAAIAI). A disulfide bond links Cys133 and Cys151.

This sequence belongs to the N-Me-Phe pilin family. The pili are polar flexible filaments of about 5.4 nanometers diameter and 2.5 micrometers average length; they consist of only a single polypeptide chain arranged in a helical configuration of five subunits per turn in the assembled pilus.

It localises to the fimbrium. It is found in the membrane. The polypeptide is Fimbrial protein (pilA) (Pseudomonas aeruginosa).